We begin with the raw amino-acid sequence, 391 residues long: Digeranylgeranylglycerophospholipid reductase (391 aa).

Gly13, Glu32, Cys43, Ala44, Gly46, Arg97, Ala121, Asp277, Gly289, and Ile290 together coordinate FAD.

It belongs to the geranylgeranyl reductase family. DGGGPL reductase subfamily. Requires FAD as cofactor.

The catalysed reaction is a 2,3-bis-O-phytanyl-sn-glycerol 1-phospholipid + 8 oxidized 2[4Fe-4S]-[ferredoxin] = a 2,3-bis-O-(geranylgeranyl)-sn-glycerol 1-phospholipid + 8 reduced 2[4Fe-4S]-[ferredoxin] + 16 H(+). It catalyses the reaction 2,3-bis-O-(phytanyl)-sn-glycerol 1-phosphate + 8 oxidized 2[4Fe-4S]-[ferredoxin] = 2,3-bis-O-(geranylgeranyl)-sn-glycerol 1-phosphate + 8 reduced 2[4Fe-4S]-[ferredoxin] + 16 H(+). It carries out the reaction a 2,3-bis-O-phytanyl-sn-glycerol 1-phospholipid + 8 A = a 2,3-bis-O-(geranylgeranyl)-sn-glycerol 1-phospholipid + 8 AH2. The enzyme catalyses CDP-2,3-bis-O-(geranylgeranyl)-sn-glycerol + 8 AH2 = CDP-2,3-bis-O-(phytanyl)-sn-glycerol + 8 A. The catalysed reaction is archaetidylserine + 8 AH2 = 2,3-bis-O-phytanyl-sn-glycero-3-phospho-L-serine + 8 A. It functions in the pathway membrane lipid metabolism; glycerophospholipid metabolism. Is involved in the reduction of 2,3-digeranylgeranylglycerophospholipids (unsaturated archaeols) into 2,3-diphytanylglycerophospholipids (saturated archaeols) in the biosynthesis of archaeal membrane lipids. Catalyzes the formation of archaetidic acid (2,3-di-O-phytanyl-sn-glyceryl phosphate) from 2,3-di-O-geranylgeranylglyceryl phosphate (DGGGP) via the hydrogenation of each double bond of the isoprenoid chains. Is also probably able to reduce double bonds of geranyl groups in CDP-2,3-bis-O-(geranylgeranyl)-sn-glycerol and archaetidylserine, thus acting at various stages in the biosynthesis of archaeal membrane lipids. The chain is Digeranylgeranylglycerophospholipid reductase from Methanothrix thermoacetophila (strain DSM 6194 / JCM 14653 / NBRC 101360 / PT) (Methanosaeta thermophila).